Here is a 706-residue protein sequence, read N- to C-terminus: Glutamine-dependent NAD(+) synthetase (706 aa).

The CN hydrolase domain maps to 5–275; sequence VTVATCALNQ…VEVLTATLDL (271 aa). Catalysis depends on glutamate 45, which acts as the Proton acceptor; for glutaminase activity. Residue lysine 114 is the For glutaminase activity of the active site. Residue cysteine 175 is the Nucleophile; for glutaminase activity of the active site. Residues 325 to 706 are ligase; sequence YHSPEEEISL…AEPQSLDGVD (382 aa). An ATP-binding site is contributed by 355 to 362; that stretch reads PLSGGVDS. The active site involves serine 357.

It in the C-terminal section; belongs to the NAD synthetase family. As to quaternary structure, homohexamer.

It carries out the reaction deamido-NAD(+) + L-glutamine + ATP + H2O = L-glutamate + AMP + diphosphate + NAD(+) + H(+). Its pathway is cofactor biosynthesis; NAD(+) biosynthesis; NAD(+) from deamido-NAD(+) (L-Gln route): step 1/1. Catalyzes the final step of the nicotinamide adenine dinucleotide (NAD) de novo synthesis pathway, the ATP-dependent amidation of deamido-NAD using L-glutamine as a nitrogen source. The polypeptide is Glutamine-dependent NAD(+) synthetase (NADSYN1) (Homo sapiens (Human)).